A 39-amino-acid polypeptide reads, in one-letter code: Cytochrome b559 subunit beta (39 aa).

Residues 14–30 (WLAIHGLAVPTVSFLGS) traverse the membrane as a helical segment. His18 is a heme binding site.

It belongs to the PsbE/PsbF family. As to quaternary structure, heterodimer of an alpha subunit and a beta subunit. PSII is composed of 1 copy each of membrane proteins PsbA, PsbB, PsbC, PsbD, PsbE, PsbF, PsbH, PsbI, PsbJ, PsbK, PsbL, PsbM, PsbT, PsbX, PsbY, PsbZ, Psb30/Ycf12, at least 3 peripheral proteins of the oxygen-evolving complex and a large number of cofactors. It forms dimeric complexes. Requires heme b as cofactor.

Its subcellular location is the plastid. It is found in the chloroplast thylakoid membrane. Functionally, this b-type cytochrome is tightly associated with the reaction center of photosystem II (PSII). PSII is a light-driven water:plastoquinone oxidoreductase that uses light energy to abstract electrons from H(2)O, generating O(2) and a proton gradient subsequently used for ATP formation. It consists of a core antenna complex that captures photons, and an electron transfer chain that converts photonic excitation into a charge separation. This chain is Cytochrome b559 subunit beta, found in Allium textile (Textile onion).